A 604-amino-acid chain; its full sequence is Elongation factor 4 (604 aa).

The region spanning 7–189 (SRLRNFCIIA…AVVDRIPPPA (183 aa)) is the tr-type G domain. GTP contacts are provided by residues 19–24 (DHGKST) and 136–139 (NKID).

Belongs to the TRAFAC class translation factor GTPase superfamily. Classic translation factor GTPase family. LepA subfamily.

Its subcellular location is the cell inner membrane. The catalysed reaction is GTP + H2O = GDP + phosphate + H(+). Its function is as follows. Required for accurate and efficient protein synthesis under certain stress conditions. May act as a fidelity factor of the translation reaction, by catalyzing a one-codon backward translocation of tRNAs on improperly translocated ribosomes. Back-translocation proceeds from a post-translocation (POST) complex to a pre-translocation (PRE) complex, thus giving elongation factor G a second chance to translocate the tRNAs correctly. Binds to ribosomes in a GTP-dependent manner. The chain is Elongation factor 4 from Prochlorococcus marinus (strain MIT 9303).